Reading from the N-terminus, the 680-residue chain is MLPQIPFLLLMFLTLVHGMFYAERYQTPTGIKGPLASPKTQYFIPYAIKSKGIPVRGEQGIPGPPGPTGPRGHPGPSGPPGKPGYGSPGLQGEPGLPGPPGISATGKPGLPGPPGKPGERGPYGHKGDIGPAGLPGPRGPPGPPGIPGPAGISVPGKPGQQGLTGAPGPRGFPGEKGAQGAPGVNGRKGETGYGSPGRPGERGLPGPQGPIGPPGPSGVGRRGENGFPGQPGIKGDRGFPGEMGPSGPPGPQGPPGKQGREGIGKPGAIGSPGQPGIPGEKGHPGAPGIAGPPGAPGFGKQGLPGLRGQRGPAGLPGAPGAKGERGPAGHPGEPGLPGSPGNMGPQGPKGIPGNHGIPGAKGEIGLVGPAGPPGARGARGPPGLDGKTGYPGEPGLNGPKGNPGLPGQKGDPGVGGTPGLRGPVGPVGAKGVPGHNGEAGPRGEPGIPGTRGPTGPPGVPGFPGSKGDPGNPGAPGPAGIATKGLNGPTGPPGPPGPRGHSGEPGLPGPPGPPGPPGQAVMPDGFIKAGQRPRLSGMPLVSANHGVTGMPVSAFTVILSKAYPAVGAPIPFDEILYNRQQHYDPRSGIFTCKIPGIYYFSYHVHVKGTHVWVGLYKNGTPTMYTYDEYSKGYLDQASGSAIMELTENDQVWLQLPNAESNGLYSSEYVHSSFSGFLVAPM.

An N-terminal signal peptide occupies residues 1–18; the sequence is MLPQIPFLLLMFLTLVHG. The nonhelical region (NC2) stretch occupies residues 19–56; it reads MFYAERYQTPTGIKGPLASPKTQYFIPYAIKSKGIPVR. A disordered region spans residues 54 to 531; sequence PVRGEQGIPG…PDGFIKAGQR (478 aa). The triple-helical region stretch occupies residues 57–519; that stretch reads GEQGIPGPPG…PGPPGPPGQA (463 aa). 2 stretches are compositionally biased toward pro residues: residues 137-147 and 207-216; these read PRGPPGPPGIP and PQGPIGPPGP. 3 stretches are compositionally biased toward low complexity: residues 303-321, 373-382, and 391-409; these read LPGL…APGA, PGARGARGPP, and PGEP…PGQK. A compositionally biased stretch (gly residues) spans 410 to 419; it reads GDPGVGGTPG. Low complexity-rich tracts occupy residues 423 to 433 and 442 to 453; these read PVGPVGAKGVP and RGEPGIPGTRGP. A compositionally biased stretch (pro residues) spans 506–516; it reads LPGPPGPPGPP. The nonhelical region (NC1) stretch occupies residues 520–680; the sequence is VMPDGFIKAG…SFSGFLVAPM (161 aa). A C1q domain is found at 547–680; it reads TGMPVSAFTV…SFSGFLVAPM (134 aa). The Ca(2+) site is built by Asp-626, Glu-627, Leu-633, and Asp-634.

In terms of assembly, homotrimer. In terms of processing, prolines at the third position of the tripeptide repeating unit (G-X-Y) are hydroxylated in some or all of the chains.

It is found in the secreted. It localises to the extracellular space. The protein resides in the extracellular matrix. Its function is as follows. Type X collagen is a product of hypertrophic chondrocytes and has been localized to presumptive mineralization zones of hyaline cartilage. In Mus musculus (Mouse), this protein is Collagen alpha-1(X) chain (Col10a1).